We begin with the raw amino-acid sequence, 302 residues long: Aspartate carbamoyltransferase catalytic subunit (302 aa).

Arg51 and Thr52 together coordinate carbamoyl phosphate. Lys80 serves as a coordination point for L-aspartate. Carbamoyl phosphate contacts are provided by Arg101, His129, and Gln132. L-aspartate contacts are provided by Arg162 and Arg223. Positions 261 and 262 each coordinate carbamoyl phosphate.

The protein belongs to the aspartate/ornithine carbamoyltransferase superfamily. ATCase family. As to quaternary structure, heterododecamer (2C3:3R2) of six catalytic PyrB chains organized as two trimers (C3), and six regulatory PyrI chains organized as three dimers (R2).

The enzyme catalyses carbamoyl phosphate + L-aspartate = N-carbamoyl-L-aspartate + phosphate + H(+). The protein operates within pyrimidine metabolism; UMP biosynthesis via de novo pathway; (S)-dihydroorotate from bicarbonate: step 2/3. Its function is as follows. Catalyzes the condensation of carbamoyl phosphate and aspartate to form carbamoyl aspartate and inorganic phosphate, the committed step in the de novo pyrimidine nucleotide biosynthesis pathway. In Chromobacterium violaceum (strain ATCC 12472 / DSM 30191 / JCM 1249 / CCUG 213 / NBRC 12614 / NCIMB 9131 / NCTC 9757 / MK), this protein is Aspartate carbamoyltransferase catalytic subunit.